The sequence spans 172 residues: Biogenesis of lysosome-related organelles complex 1 subunit 6 (172 aa).

Disordered regions lie at residues 1–36 (MSVPGPSSPDGALTRPPYCLEAGEPTPGLSDTSPDE) and 135–172 (RALKLQQKRQKEELEREQQREKEFEREKQLTARPAKRM). Positions 63–167 (DLQRSKQALQ…FEREKQLTAR (105 aa)) form a coiled coil. Over residues 143–164 (RQKEELEREQQREKEFEREKQL) the composition is skewed to basic and acidic residues.

The protein belongs to the BLOC1S6 family. Interacts with BLOC1S4 and DTNBP1/BLOC1S7. Homodimer. Component of the biogenesis of lysosome-related organelles complex 1 (BLOC-1) composed of BLOC1S1, BLOC1S2, BLOC1S3, BLOC1S4, BLOC1S5, BLOC1S6, DTNBP1/BLOC1S7 and SNAPIN/BLOC1S8. Octamer composed of one copy each BLOC1S1, BLOC1S2, BLOC1S3, BLOC1S4, BLOC1S5, BLOC1S6, DTNBP1/BLOC1S7 and SNAPIN/BLOC1S8. The BLOC-1 complex associates with the AP-3 protein complex and membrane protein cargos. Interacts with BLOC1S5, F-actin, SNAP25 isoform 1 and isoform 2, SNAP47 and STX12. Phosphorylated. As to expression, widely expressed.

It localises to the cytoplasm. The protein resides in the membrane. Component of the BLOC-1 complex, a complex that is required for normal biogenesis of lysosome-related organelles (LRO), such as platelet dense granules and melanosomes. In concert with the AP-3 complex, the BLOC-1 complex is required to target membrane protein cargos into vesicles assembled at cell bodies for delivery into neurites and nerve terminals. The BLOC-1 complex, in association with SNARE proteins, is also proposed to be involved in neurite extension. May play a role in intracellular vesicle trafficking, particularly in the vesicle-docking and fusion process. This chain is Biogenesis of lysosome-related organelles complex 1 subunit 6 (BLOC1S6), found in Homo sapiens (Human).